Consider the following 425-residue polypeptide: Glycosyl hydrolase family 109 protein 2 (425 aa).

Residues 29–30 (NR), glutamate 51, 99–102 (WLTH), 119–120 (EV), and asparagine 148 contribute to the NAD(+) site. Position 177 (tyrosine 177) interacts with substrate. NAD(+) is bound by residues 194-198 (FHNHW) and tyrosine 211. Substrate is bound by residues 211-214 (YPTH) and tyrosine 293.

Belongs to the Gfo/Idh/MocA family. Glycosyl hydrolase 109 subfamily. NAD(+) is required as a cofactor.

Its function is as follows. Glycosidase. The sequence is that of Glycosyl hydrolase family 109 protein 2 from Bacteroides fragilis (strain YCH46).